Reading from the N-terminus, the 581-residue chain is Serine/threonine-protein kinase SSN3 (581 aa).

A disordered region spans residues Leu-34–Met-57. The span at Gly-48–Met-57 shows a compositional bias: polar residues. The region spanning Tyr-85–Phe-475 is the Protein kinase domain. ATP contacts are provided by residues Ile-91–Val-99 and Lys-195. Asp-298 serves as the catalytic Proton acceptor.

It belongs to the protein kinase superfamily. CMGC Ser/Thr protein kinase family. CDC2/CDKX subfamily. Component of the SRB8-11 complex, a regulatory module of the Mediator complex. The cofactor is Mg(2+).

Its subcellular location is the nucleus. The catalysed reaction is L-seryl-[protein] + ATP = O-phospho-L-seryl-[protein] + ADP + H(+). It carries out the reaction L-threonyl-[protein] + ATP = O-phospho-L-threonyl-[protein] + ADP + H(+). The enzyme catalyses [DNA-directed RNA polymerase] + ATP = phospho-[DNA-directed RNA polymerase] + ADP + H(+). Component of the SRB8-11 complex. The SRB8-11 complex is a regulatory module of the Mediator complex which is itself involved in regulation of basal and activated RNA polymerase II-dependent transcription. The SRB8-11 complex may be involved in the transcriptional repression of a subset of genes regulated by Mediator. It may inhibit the association of the Mediator complex with RNA polymerase II to form the holoenzyme complex. The SRB8-11 complex phosphorylates the C-terminal domain (CTD) of the largest subunit of RNA polymerase II. The protein is Serine/threonine-protein kinase SSN3 (SSN3) of Eremothecium gossypii (strain ATCC 10895 / CBS 109.51 / FGSC 9923 / NRRL Y-1056) (Yeast).